We begin with the raw amino-acid sequence, 290 residues long: Endoplasmic reticulum-Golgi intermediate compartment protein 1 (290 aa).

The Cytoplasmic segment spans residues Met1–Ala26. A helical transmembrane segment spans residues Ile27–Phe47. Residues Ile48 to Thr254 are Lumenal-facing. The N-linked (GlcNAc...) asparagine glycan is linked to Asn74. The chain crosses the membrane as a helical span at residues Thr255–Phe275. The Cytoplasmic portion of the chain corresponds to Thr276 to His290.

It belongs to the ERGIC family. As to quaternary structure, may form a heteromeric complex composed of ERGIC1, ERGIC2 and ERGIC3. Within the complex, the interaction with ERGIC3 is direct. Interacts with ERGIC3/ERV46. In terms of processing, N-glycosylated.

The protein localises to the endoplasmic reticulum membrane. The protein resides in the endoplasmic reticulum-Golgi intermediate compartment membrane. It is found in the golgi apparatus membrane. Its function is as follows. Possible role in transport between endoplasmic reticulum and Golgi. This Homo sapiens (Human) protein is Endoplasmic reticulum-Golgi intermediate compartment protein 1 (ERGIC1).